A 78-amino-acid polypeptide reads, in one-letter code: Large ribosomal subunit protein bL28 (78 aa).

Residues 1 to 22 (MSRVCQVTGKRPMSGNNRSHAM) are disordered.

Belongs to the bacterial ribosomal protein bL28 family.

The protein is Large ribosomal subunit protein bL28 of Yersinia pseudotuberculosis serotype O:1b (strain IP 31758).